Consider the following 169-residue polypeptide: MAQGDDNKQAIGQIIRQEQALIFPSLNENDAFSLGQRIRDIAVKDKLGIAIDISLWDRRLFFAATAGATADNTEWLRRKFNVVRRFHVSTYRLVLEQNREDRMFAPYKALDVADYALAGGGFPIRVSGAGVIGAVIVSGLPQREDHNLVVRAVAEHVGQDPVALALPAA.

It belongs to the UPF0303 family.

In Brucella canis (strain ATCC 23365 / NCTC 10854 / RM-666), this protein is UPF0303 protein BCAN_A1444.